A 123-amino-acid chain; its full sequence is Small ribosomal subunit protein uS12 (123 aa).

At Asp-89 the chain carries 3-methylthioaspartic acid. Positions Leu-102–Lys-123 are disordered. The span at Gly-113–Lys-123 shows a compositional bias: basic residues.

The protein belongs to the universal ribosomal protein uS12 family. In terms of assembly, part of the 30S ribosomal subunit. Contacts proteins S8 and S17. May interact with IF1 in the 30S initiation complex.

Functionally, with S4 and S5 plays an important role in translational accuracy. In terms of biological role, interacts with and stabilizes bases of the 16S rRNA that are involved in tRNA selection in the A site and with the mRNA backbone. Located at the interface of the 30S and 50S subunits, it traverses the body of the 30S subunit contacting proteins on the other side and probably holding the rRNA structure together. The combined cluster of proteins S8, S12 and S17 appears to hold together the shoulder and platform of the 30S subunit. The protein is Small ribosomal subunit protein uS12 of Magnetococcus marinus (strain ATCC BAA-1437 / JCM 17883 / MC-1).